The following is a 505-amino-acid chain: Kinesin light chain 3 (505 aa).

Residues 1–20 (MSVQVAAPGGLGLGLERPSP) are disordered. The stretch at 88–150 (LLALSAHVGA…EEEKSHLEFL (63 aa)) forms a coiled coil. Positions 157–193 (DPPAESQQPESPPRRDSLASLFPSEEEERRGPEAVGA) are disordered. S173 carries the phosphoserine modification. 5 TPR repeats span residues 207 to 240 (LRTL…LERS), 249 to 282 (ATML…REQT), 291 to 324 (AATL…REKV), 333 to 366 (AKQL…YEAL), and 375 to 408 (AKTK…EALP). The segment at 409 to 505 (APLGAPNTGT…STSTQDLGPR (97 aa)) is disordered. Residues 416 to 434 (TGTTSDTQQQTLSRSSSFS) show a composition bias toward low complexity. Positions 435–453 (KLRESIRRGSEKLVSRLRG) are enriched in basic and acidic residues. Phosphoserine is present on S467. Polar residues predominate over residues 489–505 (SEASRTLSTSTQDLGPR). Position 499 is a phosphothreonine (T499).

The protein belongs to the kinesin light chain family. As to quaternary structure, oligomer composed of two heavy chains and two light chains. Associates with microtubulin in an ATP-dependent manner. Interacts with KIF5C. Interacts with ODF1. Interacts with LRGUK. Interacts with VDAC2.

It is found in the cytoplasm. It localises to the cytoskeleton. Its subcellular location is the mitochondrion. Functionally, kinesin is a microtubule-associated force-producing protein that may play a role in organelle transport. Plays a role during spermiogenesis in the development of the sperm tail midpiece and in the normal function of spermatozoa. May play a role in the formation of the mitochondrial sheath formation in the developing spermatid midpiece. The protein is Kinesin light chain 3 (KLC3) of Bos taurus (Bovine).